Reading from the N-terminus, the 372-residue chain is MGKSDRKLTEENSIENGVKPGKLTEEEMDAIDNSSQSKIVAIASMAKRLGLGLGSDLSQVEYPSSFIAPFSTLNFFSNNFANHFNILLRANKIENEMDRLIEVFKYSTTIHKIPEDCMKVPLNAVIGETQSLNFQTPDLNSPNDLISDNYLITEQVSELPPNTATCIYNKKEGVKALFNHESKIVFQITNVKTPTTGRKYVRFDKFDEEYDIEFPVLHSRFMRGFVEYCGEGSIKSNKSKCFVSTNYIAKPLIGGNYHAYEAKVYNGIDSKPIYKISGQWDGESKITNLKTNETKPFFKNITTTTNFTPTILNTDSSVVWGKIIQSVAQGKPINLAREKSKIIENQKTLNWAPSQFFLNLEMGVWEPKLLND.

Over residues 1 to 10 the composition is skewed to basic and acidic residues; it reads MGKSDRKLTE. Residues 1–25 are disordered; it reads MGKSDRKLTEENSIENGVKPGKLTE.

Belongs to the OSBP family.

This chain is Oxysterol-binding protein 3 (osbC), found in Dictyostelium discoideum (Social amoeba).